Here is a 461-residue protein sequence, read N- to C-terminus: D-phenylhydantoinase (461 aa).

Residues His-59, His-61, and Lys-151 each contribute to the a divalent metal cation site. Residue Lys-151 is modified to N6-carboxylysine. Tyr-156 provides a ligand contact to substrate. The a divalent metal cation site is built by His-182 and His-239. Ser-286 lines the substrate pocket. Asp-313 contributes to the a divalent metal cation binding site. Asn-335 is a substrate binding site.

Belongs to the metallo-dependent hydrolases superfamily. Hydantoinase/dihydropyrimidinase family. As to quaternary structure, homotetramer. A divalent metal cation serves as cofactor. In terms of processing, carboxylation allows a single lysine to coordinate two divalent metal cations.

It catalyses the reaction D-5-phenylhydantoin + H2O = N-carbamoyl-D-phenylglycine + H(+). Catalyzes the stereospecific hydrolysis of the cyclic amide bond of D-hydantoin derivatives with an aromatic side chains at the 5'-position. Has no activity on dihydropyrimidines. The physiological function is unknown. This is D-phenylhydantoinase from Escherichia coli (strain 55989 / EAEC).